A 258-amino-acid chain; its full sequence is tRNA pseudouridine synthase A (258 aa).

The Nucleophile role is filled by aspartate 53. Residue tyrosine 111 participates in substrate binding.

The protein belongs to the tRNA pseudouridine synthase TruA family. In terms of assembly, homodimer.

The catalysed reaction is uridine(38/39/40) in tRNA = pseudouridine(38/39/40) in tRNA. Its function is as follows. Formation of pseudouridine at positions 38, 39 and 40 in the anticodon stem and loop of transfer RNAs. The sequence is that of tRNA pseudouridine synthase A from Streptococcus agalactiae serotype III (strain NEM316).